We begin with the raw amino-acid sequence, 473 residues long: Probable aspartokinase (473 aa).

ACT domains are found at residues 323–392 (IFGA…FLNN) and 409–473 (VVGA…KTNS).

The protein belongs to the aspartokinase family.

It catalyses the reaction L-aspartate + ATP = 4-phospho-L-aspartate + ADP. Its pathway is amino-acid biosynthesis; L-lysine biosynthesis via DAP pathway; (S)-tetrahydrodipicolinate from L-aspartate: step 1/4. The protein operates within amino-acid biosynthesis; L-methionine biosynthesis via de novo pathway; L-homoserine from L-aspartate: step 1/3. It participates in amino-acid biosynthesis; L-threonine biosynthesis; L-threonine from L-aspartate: step 1/5. The sequence is that of Probable aspartokinase from Methanocaldococcus jannaschii (strain ATCC 43067 / DSM 2661 / JAL-1 / JCM 10045 / NBRC 100440) (Methanococcus jannaschii).